The following is a 400-amino-acid chain: Phosphoglycerate kinase (400 aa).

Substrate-binding positions include 21–23, Arg36, 59–62, Arg119, and Arg160; these read DFN and HLGR. Residues Lys211, Glu329, and 356-359 each bind ATP; that span reads GGDS.

The protein belongs to the phosphoglycerate kinase family. In terms of assembly, monomer.

The protein resides in the cytoplasm. The catalysed reaction is (2R)-3-phosphoglycerate + ATP = (2R)-3-phospho-glyceroyl phosphate + ADP. The protein operates within carbohydrate degradation; glycolysis; pyruvate from D-glyceraldehyde 3-phosphate: step 2/5. This chain is Phosphoglycerate kinase, found in Lactiplantibacillus plantarum (strain ATCC BAA-793 / NCIMB 8826 / WCFS1) (Lactobacillus plantarum).